Reading from the N-terminus, the 211-residue chain is Pyridoxine/pyridoxamine 5'-phosphate oxidase (211 aa).

Substrate contacts are provided by residues 7–10 (RREY) and Lys65. FMN-binding positions include 60 to 65 (RIVLLK), 75 to 76 (YT), Arg81, Lys82, and Gln104. Substrate is bound by residues Tyr122, Arg126, and Ser130. Residues 139-140 (QS) and Trp184 each bind FMN. 190–192 (RLH) is a substrate binding site. Position 194 (Arg194) interacts with FMN.

The protein belongs to the pyridoxamine 5'-phosphate oxidase family. Homodimer. FMN is required as a cofactor.

It catalyses the reaction pyridoxamine 5'-phosphate + O2 + H2O = pyridoxal 5'-phosphate + H2O2 + NH4(+). The enzyme catalyses pyridoxine 5'-phosphate + O2 = pyridoxal 5'-phosphate + H2O2. It participates in cofactor metabolism; pyridoxal 5'-phosphate salvage; pyridoxal 5'-phosphate from pyridoxamine 5'-phosphate: step 1/1. It functions in the pathway cofactor metabolism; pyridoxal 5'-phosphate salvage; pyridoxal 5'-phosphate from pyridoxine 5'-phosphate: step 1/1. Functionally, catalyzes the oxidation of either pyridoxine 5'-phosphate (PNP) or pyridoxamine 5'-phosphate (PMP) into pyridoxal 5'-phosphate (PLP). The protein is Pyridoxine/pyridoxamine 5'-phosphate oxidase of Vibrio vulnificus (strain CMCP6).